Consider the following 265-residue polypeptide: Neuronal membrane glycoprotein M6-b (265 aa).

The chain crosses the membrane as a helical span at residues 31–51 (GGVPYASLVATILCFSGVALF). Asparagine 73 carries an N-linked (GlcNAc...) asparagine glycan. 2 consecutive transmembrane segments (helical) span residues 90-110 (VIYG…AEGF) and 136-156 (FVFL…FSAV). Residue asparagine 177 is glycosylated (N-linked (GlcNAc...) asparagine). Residues 224–244 (LFIVACAGAGATVIALLIYMM) traverse the membrane as a helical segment. The residue at position 257 (serine 257) is a Phosphoserine.

It belongs to the myelin proteolipid protein family. In terms of assembly, interacts with SERT.

It localises to the membrane. It is found in the cell membrane. Functionally, may be involved in neural development. Involved in regulation of osteoblast function and bone formation. Involved in matrix vesicle release by osteoblasts; this function seems to involve maintenance of the actin cytoskeleton. May be involved in cellular trafficking of SERT and thereby in regulation of serotonin uptake. In Pongo abelii (Sumatran orangutan), this protein is Neuronal membrane glycoprotein M6-b (GPM6B).